The chain runs to 218 residues: Ras-related protein Rab-27B (218 aa).

Threonine 2 carries the N-acetylthreonine modification. Residue 16–24 (GDSGVGKTT) participates in GTP binding. Residues 38-46 (FITTVGIDF) carry the Effector region motif. GTP contacts are provided by residues 74–78 (DTAGQ), 133–136 (NKAD), and 163–165 (SAA). Cysteine 123 and cysteine 188 are joined by a disulfide. The tract at residues 194–218 (IPDTVNGGNSGNLDGEKPPEKKCIC) is disordered. The segment covering 207–218 (DGEKPPEKKCIC) has biased composition (basic and acidic residues). S-geranylgeranyl cysteine attachment occurs at residues cysteine 216 and cysteine 218. Cysteine 218 carries the post-translational modification Cysteine methyl ester.

It belongs to the small GTPase superfamily. Rab family. Interacts with SYTL2, SYTL4, MYRIP and MLPH. Interacts with RPH3A and RPH3A. Interacts (GDP-bound form preferentially) with DENND10. As to expression, expressed primarily in testis.

It localises to the membrane. Its subcellular location is the late endosome. It catalyses the reaction GTP + H2O = GDP + phosphate + H(+). Its activity is regulated as follows. Regulated by guanine nucleotide exchange factors (GEFs) which promote the exchange of bound GDP for free GTP, GTPase activating proteins (GAPs) which increase the GTP hydrolysis activity, and GDP dissociation inhibitors which inhibit the dissociation of the nucleotide from the GTPase. Activated by GEFs such as DENND10. Functionally, small GTPase which cycles between active GTP-bound and inactive GDP-bound states. In its active state, binds to a variety of effector proteins to regulate homeostasis of late endocytic pathway, including endosomal positioning, maturation and secretion. Plays a role in NTRK2/TRKB axonal anterograde transport by facilitating the association of NTRK2/TRKB with KLC1. May be involved in targeting uroplakins to urothelial apical membranes. The sequence is that of Ras-related protein Rab-27B (RAB27B) from Homo sapiens (Human).